The following is a 628-amino-acid chain: Putative lipase ATG15 (628 aa).

The Cytoplasmic segment spans residues 1 to 32; sequence MLAAEKRRLLHKTRPVSASEKPGSIYPQRALY. Residues 33–53 form a helical; Signal-anchor for type II membrane protein membrane-spanning segment; that stretch reads LLVCFSIATISLGYLHFIGAI. At 54–628 the chain is on the lumenal side; that stretch reads DIGRFGISSV…GYDGDVDDDQ (575 aa). N-linked (GlcNAc...) asparagine glycans are attached at residues asparagine 261, asparagine 299, and asparagine 383. Residue serine 401 is the Charge relay system of the active site. The N-linked (GlcNAc...) asparagine glycan is linked to asparagine 518. The tract at residues 540-605 is disordered; the sequence is HDDDVPDEPE…ISEPSESPKK (66 aa). The span at 562–586 shows a compositional bias: low complexity; the sequence is PSSSTSDGKNNRISSTATTTISPTS. A compositionally biased stretch (polar residues) spans 591–600; the sequence is PTSSDISEPS.

Belongs to the AB hydrolase superfamily. Lipase family. Binds to both phosphatidylinositol (PI) and phosphatidylinositol 3,5-bisphosphate (PIP2).

It is found in the endosome. It localises to the multivesicular body membrane. The protein localises to the prevacuolar compartment membrane. The enzyme catalyses a triacylglycerol + H2O = a diacylglycerol + a fatty acid + H(+). Lipase which is essential for lysis of subvacuolar cytoplasm to vacuole targeted bodies and intravacuolar autophagic bodies. Involved in the lysis of intravacuolar multivesicular body (MVB) vesicles. The intravacuolar membrane disintegration by ATG15 is critical to life span extension. This chain is Putative lipase ATG15 (ATG15), found in Scheffersomyces stipitis (strain ATCC 58785 / CBS 6054 / NBRC 10063 / NRRL Y-11545) (Yeast).